The primary structure comprises 299 residues: Acetylglutamate kinase (299 aa).

Residues 70–71, Arg-92, and Asn-186 contribute to the substrate site; that span reads GG.

The protein belongs to the acetylglutamate kinase family. ArgB subfamily.

Its subcellular location is the cytoplasm. The catalysed reaction is N-acetyl-L-glutamate + ATP = N-acetyl-L-glutamyl 5-phosphate + ADP. The protein operates within amino-acid biosynthesis; L-arginine biosynthesis; N(2)-acetyl-L-ornithine from L-glutamate: step 2/4. Its function is as follows. Catalyzes the ATP-dependent phosphorylation of N-acetyl-L-glutamate. The chain is Acetylglutamate kinase from Thermoanaerobacter pseudethanolicus (strain ATCC 33223 / 39E) (Clostridium thermohydrosulfuricum).